Here is a 484-residue protein sequence, read N- to C-terminus: RNA polymerase sigma-54 factor 1 (484 aa).

The segment at residues 355-374 is a DNA-binding region (H-T-H motif); that stretch reads NLKAVAEAIQMHESTVSRVT. Residues 444-452 carry the RPON box motif; it reads ARRTVAKYR. A disordered region spans residues 464-484; it reads RRDNMWSTMNSRASGGTGLDK. The span at 468-477 shows a compositional bias: polar residues; sequence MWSTMNSRAS.

Belongs to the sigma-54 factor family.

In terms of biological role, sigma factors are initiation factors that promote the attachment of RNA polymerase to specific initiation sites and are then released. This sigma factor is responsible for the expression of the nitrogen fixation genes. The protein is RNA polymerase sigma-54 factor 1 (rpoN1) of Bradyrhizobium diazoefficiens (strain JCM 10833 / BCRC 13528 / IAM 13628 / NBRC 14792 / USDA 110).